The sequence spans 336 residues: N-((2S)-2-amino-2-carboxyethyl)-L-glutamate dehydrogenase (336 aa).

The active-site Proton donor/acceptor is the Lys-78. NAD(+)-binding residues include Arg-122 and Lys-242.

This sequence belongs to the ornithine cyclodeaminase/mu-crystallin family. As to quaternary structure, homodimer.

The enzyme catalyses N-[(2S)-2-amino-2-carboxyethyl]-L-glutamate + NAD(+) + H2O = (S)-2,3-diaminopropanoate + 2-oxoglutarate + NADH + H(+). It functions in the pathway siderophore biosynthesis. Its function is as follows. Catalyzes the hydrolysis of N-((2S)-2-amino-2-carboxyethyl)-L-glutamate (ACEGA) to form L-2,3-diaminopropionic acid and 2-oxoglutarate. Involved in the biosynthesis of L-2,3-diaminopropionic acid (L-Dap), a precursor of staphyloferrin B and antibiotics. The protein is N-((2S)-2-amino-2-carboxyethyl)-L-glutamate dehydrogenase of Staphylococcus aureus (strain NCTC 8325 / PS 47).